Here is a 72-residue protein sequence, read N- to C-terminus: ATP synthase subunit c (72 aa).

2 helical membrane passes run 1–21 and 48–68; these read MSLG…GAGI and MFIG…FSFI.

This sequence belongs to the ATPase C chain family. As to quaternary structure, F-type ATPases have 2 components, F(1) - the catalytic core - and F(0) - the membrane proton channel. F(1) has five subunits: alpha(3), beta(3), gamma(1), delta(1), epsilon(1). F(0) has three main subunits: a(1), b(2) and c(10-14). The alpha and beta chains form an alternating ring which encloses part of the gamma chain. F(1) is attached to F(0) by a central stalk formed by the gamma and epsilon chains, while a peripheral stalk is formed by the delta and b chains.

The protein localises to the cell membrane. In terms of biological role, f(1)F(0) ATP synthase produces ATP from ADP in the presence of a proton or sodium gradient. F-type ATPases consist of two structural domains, F(1) containing the extramembraneous catalytic core and F(0) containing the membrane proton channel, linked together by a central stalk and a peripheral stalk. During catalysis, ATP synthesis in the catalytic domain of F(1) is coupled via a rotary mechanism of the central stalk subunits to proton translocation. Its function is as follows. Key component of the F(0) channel; it plays a direct role in translocation across the membrane. A homomeric c-ring of between 10-14 subunits forms the central stalk rotor element with the F(1) delta and epsilon subunits. This chain is ATP synthase subunit c, found in Geobacillus kaustophilus (strain HTA426).